We begin with the raw amino-acid sequence, 199 residues long: Holliday junction branch migration complex subunit RuvA (199 aa).

The interval Met-1–Ala-64 is domain I. The domain II stretch occupies residues Arg-65 to Pro-143. Residues Ala-144–Ser-146 are flexible linker. A domain III region spans residues Ala-147 to Lys-199.

The protein belongs to the RuvA family. In terms of assembly, homotetramer. Forms an RuvA(8)-RuvB(12)-Holliday junction (HJ) complex. HJ DNA is sandwiched between 2 RuvA tetramers; dsDNA enters through RuvA and exits via RuvB. An RuvB hexamer assembles on each DNA strand where it exits the tetramer. Each RuvB hexamer is contacted by two RuvA subunits (via domain III) on 2 adjacent RuvB subunits; this complex drives branch migration. In the full resolvosome a probable DNA-RuvA(4)-RuvB(12)-RuvC(2) complex forms which resolves the HJ.

Its subcellular location is the cytoplasm. Functionally, the RuvA-RuvB-RuvC complex processes Holliday junction (HJ) DNA during genetic recombination and DNA repair, while the RuvA-RuvB complex plays an important role in the rescue of blocked DNA replication forks via replication fork reversal (RFR). RuvA specifically binds to HJ cruciform DNA, conferring on it an open structure. The RuvB hexamer acts as an ATP-dependent pump, pulling dsDNA into and through the RuvAB complex. HJ branch migration allows RuvC to scan DNA until it finds its consensus sequence, where it cleaves and resolves the cruciform DNA. This Sphingopyxis alaskensis (strain DSM 13593 / LMG 18877 / RB2256) (Sphingomonas alaskensis) protein is Holliday junction branch migration complex subunit RuvA.